The chain runs to 622 residues: WD repeat-containing protein 70 (622 aa).

The span at 37–55 (TAVERSKKTLEAREKEEQI) shows a compositional bias: basic and acidic residues. Positions 37 to 141 (TAVERSKKTL…DNPVKGIPDS (105 aa)) are disordered. The segment covering 67-84 (SSSRQKNTDTSSSSSGSE) has biased composition (low complexity). Residues 120–132 (SDDEDEEQHEDDD) are compositionally biased toward acidic residues. 7 WD repeats span residues 148–187 (HGTK…ASLQ), 195–236 (CECH…ECVK), 249–289 (GHTA…KHKG), 298–337 (GKRV…HTKF), 344–383 (TPGT…NPLN), 389–434 (ANYF…KVYE), and 437–476 (VTEA…QRGA). Basic and acidic residues predominate over residues 508–533 (REPRQRSTRKQLEKDRLDPVKSHKPE). Disordered stretches follow at residues 508–549 (REPR…GTHG) and 602–622 (AEVE…KRKI). Gly residues predominate over residues 539-549 (PGRGGRVGTHG). Residues 604–614 (VESDEEETDNE) show a composition bias toward acidic residues.

This sequence belongs to the WD repeat GAD-1 family.

This Xenopus tropicalis (Western clawed frog) protein is WD repeat-containing protein 70 (wdr70).